The sequence spans 123 residues: Large ribosomal subunit protein bL17 (123 aa).

It belongs to the bacterial ribosomal protein bL17 family. In terms of assembly, part of the 50S ribosomal subunit. Contacts protein L32.

The protein is Large ribosomal subunit protein bL17 of Borreliella burgdorferi (strain ATCC 35210 / DSM 4680 / CIP 102532 / B31) (Borrelia burgdorferi).